Here is a 309-residue protein sequence, read N- to C-terminus: Ornithine carbamoyltransferase (309 aa).

Carbamoyl phosphate-binding positions include 57-60 (STRT), Gln84, Arg108, and 135-138 (HPCQ). L-ornithine is bound by residues Asn166, Asp224, and 228–229 (SM). Carbamoyl phosphate is bound by residues 264–265 (CL) and Arg292.

This sequence belongs to the aspartate/ornithine carbamoyltransferase superfamily. OTCase family.

Its subcellular location is the cytoplasm. It carries out the reaction carbamoyl phosphate + L-ornithine = L-citrulline + phosphate + H(+). It participates in amino-acid biosynthesis; L-arginine biosynthesis; L-arginine from L-ornithine and carbamoyl phosphate: step 1/3. Functionally, reversibly catalyzes the transfer of the carbamoyl group from carbamoyl phosphate (CP) to the N(epsilon) atom of ornithine (ORN) to produce L-citrulline. In Paracidovorax citrulli (strain AAC00-1) (Acidovorax citrulli), this protein is Ornithine carbamoyltransferase.